The chain runs to 318 residues: MWLPLLLGALLWAVLWLLRDRQSLPASDAFIFITGCDSGFGRLLALQLDQKGFQVLAGCLTPSGAEDLQQMASSRLHTTLLDITDPQNVQQVAKWVKTRVGETGLFGLVNNAGVAGIIGPTPWLTQDDFQRVLSVNTLGPIGVTLALLPLLQQARGRVVNITSVLGRIAANGGGYCVSKFGLEAFSDSLRRDMAPFGVQVSIVEPGFFRTPVTNLESLESTLKACWARLPPAIQAHYGEAFLDTYLRVQRRIMNLICDPELTKVTSCLEHALTARHPRTRYSPGWDAKLLWLPASYLPARVVDAVLTWILPRPAQSVS.

The chain crosses the membrane as a helical span at residues 1-23 (MWLPLLLGALLWAVLWLLRDRQS). Over 24-288 (LPASDAFIFI…TRYSPGWDAK (265 aa)) the chain is Lumenal. 32–56 (FITGCDSGFGRLLALQLDQKGFQVL) serves as a coordination point for NADP(+). Ser163 serves as a coordination point for substrate. The active-site Proton acceptor is the Tyr175. The chain crosses the membrane as a helical span at residues 289 to 309 (LLWLPASYLPARVVDAVLTWI). Topologically, residues 310 to 318 (LPRPAQSVS) are cytoplasmic.

It belongs to the short-chain dehydrogenases/reductases (SDR) family. As to quaternary structure, homodimer. In terms of tissue distribution, expressed in eye, liver, kidney, brain, intestine, placenta, epididymus and submaxillary gland. In eye, strongly expressed in the retinal pigment epithelium, with lower expression levels detected in the inner segment of the photoreceptor cells and in the outer plexiform layer. In kidney, strong expression detected in the distal tubules and the transitional epithelium in the renal pelvis, with weaker expression detected in the epithelium of the outer stripe of the outer zone of the medulla. In liver, detected in hepatocytes in the centrilobular area. In lung, present in club cells in the epithelium of the bronchiole, in parenchyma and in cartilage surrounding the secondary bronchi. In skin, expressed in epidermis, hair follicles and mast cells in the dermis. Expressed in heart. Not detected in heart. Not detected in lung, spleen, skeletal muscle and testis.

The protein resides in the endoplasmic reticulum membrane. It catalyses the reaction 11-cis-retinol + NAD(+) = 11-cis-retinal + NADH + H(+). The catalysed reaction is 9-cis-retinol + NAD(+) = 9-cis-retinal + NADH + H(+). It carries out the reaction 13-cis-retinol + NAD(+) = 13-cis-retinal + NADH + H(+). The enzyme catalyses androsterone + NAD(+) = 5alpha-androstan-3,17-dione + NADH + H(+). It catalyses the reaction 5alpha-androstane-3alpha,17beta-diol + NAD(+) = 17beta-hydroxy-5alpha-androstan-3-one + NADH + H(+). It participates in cofactor metabolism; retinol metabolism. With respect to regulation, inhibited by 9-cis-, 13-cis- and all-trans-retinoic acids, with the most potent inhibitor being 13-cis-retinoic acid. Weakly inhibited by oleic acid. Its function is as follows. Catalyzes the oxidation of cis-isomers of retinol, including 11-cis-, 9-cis-, and 13-cis-retinol in an NAD-dependent manner. Has no activity towards all-trans retinal. Plays a significant role in 11-cis retinol oxidation in the retinal pigment epithelium cells (RPE). Also recognizes steroids (androsterone, androstanediol) as its substrates. The chain is Retinol dehydrogenase 5 from Mus musculus (Mouse).